Here is a 157-residue protein sequence, read N- to C-terminus: Vitamin K-dependent protein C (157 aa).

The region spanning 1-157 (ENGEVDLDIQ…GCGRLHNYGV (157 aa)) is the Peptidase S1 domain. Residue asparagine 17 is glycosylated (N-linked (GlcNAc...) asparagine). The active-site Charge relay system is aspartate 26. An N-linked (GlcNAc...) asparagine glycan is attached at asparagine 78. 2 disulfide bridges follow: cysteine 96-cysteine 110 and cysteine 121-cysteine 149. The active-site Charge relay system is serine 125.

The protein belongs to the peptidase S1 family. Plasma; synthesized in the liver.

Its subcellular location is the secreted. The protein localises to the golgi apparatus. It is found in the endoplasmic reticulum. It catalyses the reaction Degradation of blood coagulation factors Va and VIIIa.. Functionally, protein C is a vitamin K-dependent serine protease that regulates blood coagulation by inactivating factors Va and VIIIa in the presence of calcium ions and phospholipids. Exerts a protective effect on the endothelial cell barrier function. The polypeptide is Vitamin K-dependent protein C (PROC) (Equus caballus (Horse)).